The chain runs to 497 residues: Aspartyl/glutamyl-tRNA(Asn/Gln) amidotransferase subunit B (497 aa).

The protein belongs to the GatB/GatE family. GatB subfamily. As to quaternary structure, heterotrimer of A, B and C subunits.

It catalyses the reaction L-glutamyl-tRNA(Gln) + L-glutamine + ATP + H2O = L-glutaminyl-tRNA(Gln) + L-glutamate + ADP + phosphate + H(+). The catalysed reaction is L-aspartyl-tRNA(Asn) + L-glutamine + ATP + H2O = L-asparaginyl-tRNA(Asn) + L-glutamate + ADP + phosphate + 2 H(+). Its function is as follows. Allows the formation of correctly charged Asn-tRNA(Asn) or Gln-tRNA(Gln) through the transamidation of misacylated Asp-tRNA(Asn) or Glu-tRNA(Gln) in organisms which lack either or both of asparaginyl-tRNA or glutaminyl-tRNA synthetases. The reaction takes place in the presence of glutamine and ATP through an activated phospho-Asp-tRNA(Asn) or phospho-Glu-tRNA(Gln). This Novosphingobium aromaticivorans (strain ATCC 700278 / DSM 12444 / CCUG 56034 / CIP 105152 / NBRC 16084 / F199) protein is Aspartyl/glutamyl-tRNA(Asn/Gln) amidotransferase subunit B.